A 125-amino-acid chain; its full sequence is Large ribosomal subunit protein uL24 (125 aa).

Belongs to the universal ribosomal protein uL24 family. Part of the 50S ribosomal subunit.

One of two assembly initiator proteins, it binds directly to the 5'-end of the 23S rRNA, where it nucleates assembly of the 50S subunit. Its function is as follows. One of the proteins that surrounds the polypeptide exit tunnel on the outside of the subunit. This chain is Large ribosomal subunit protein uL24, found in Mycoplasma mobile (strain ATCC 43663 / 163K / NCTC 11711) (Mesomycoplasma mobile).